The following is a 453-amino-acid chain: Adenosylmethionine-8-amino-7-oxononanoate aminotransferase (453 aa).

118–119 (GA) serves as a coordination point for pyridoxal 5'-phosphate. Tyrosine 151 provides a ligand contact to substrate. Aspartate 257 contributes to the pyridoxal 5'-phosphate binding site. Positions 286, 321, and 416 each coordinate substrate. Lysine 286 carries the post-translational modification N6-(pyridoxal phosphate)lysine.

Belongs to the class-III pyridoxal-phosphate-dependent aminotransferase family. BioA subfamily. As to quaternary structure, homodimer. Requires pyridoxal 5'-phosphate as cofactor.

It localises to the cytoplasm. The catalysed reaction is (8S)-8-amino-7-oxononanoate + S-adenosyl-L-methionine = S-adenosyl-4-methylsulfanyl-2-oxobutanoate + (7R,8S)-7,8-diammoniononanoate. It participates in cofactor biosynthesis; biotin biosynthesis; 7,8-diaminononanoate from 8-amino-7-oxononanoate (SAM route): step 1/1. Its function is as follows. Catalyzes the transfer of the alpha-amino group from S-adenosyl-L-methionine (SAM) to 7-keto-8-aminopelargonic acid (KAPA) to form 7,8-diaminopelargonic acid (DAPA). It is the only aminotransferase known to utilize SAM as an amino donor. This chain is Adenosylmethionine-8-amino-7-oxononanoate aminotransferase, found in Aquifex aeolicus (strain VF5).